Here is an 853-residue protein sequence, read N- to C-terminus: DNA mismatch repair protein MutS (853 aa).

Residue 614–621 (GPNMGGKS) participates in ATP binding.

Belongs to the DNA mismatch repair MutS family.

Its function is as follows. This protein is involved in the repair of mismatches in DNA. It is possible that it carries out the mismatch recognition step. This protein has a weak ATPase activity. This chain is DNA mismatch repair protein MutS, found in Escherichia coli O6:H1 (strain CFT073 / ATCC 700928 / UPEC).